A 99-amino-acid polypeptide reads, in one-letter code: Acylphosphatase (99 aa).

An Acylphosphatase-like domain is found at 10–99 (RLTAFVHGHV…PRGVEGFTER (90 aa)). Residues R25 and N43 contribute to the active site.

The protein belongs to the acylphosphatase family.

The enzyme catalyses an acyl phosphate + H2O = a carboxylate + phosphate + H(+). This is Acylphosphatase (acyP) from Corynebacterium efficiens (strain DSM 44549 / YS-314 / AJ 12310 / JCM 11189 / NBRC 100395).